The primary structure comprises 1252 residues: DNA-directed RNA polymerase subunit beta (1252 aa).

Belongs to the RNA polymerase beta chain family. In terms of assembly, the RNAP catalytic core consists of 2 alpha, 1 beta, 1 beta' and 1 omega subunit. When a sigma factor is associated with the core the holoenzyme is formed, which can initiate transcription.

The enzyme catalyses RNA(n) + a ribonucleoside 5'-triphosphate = RNA(n+1) + diphosphate. In terms of biological role, DNA-dependent RNA polymerase catalyzes the transcription of DNA into RNA using the four ribonucleoside triphosphates as substrates. The polypeptide is DNA-directed RNA polymerase subunit beta (Chlamydia felis (strain Fe/C-56) (Chlamydophila felis)).